We begin with the raw amino-acid sequence, 321 residues long: GTP 3',8-cyclase (321 aa).

The region spanning 5–233 (SFNRVIDYIR…QGSSKIYTLE (229 aa)) is the Radical SAM core domain. Residue Arg-14 participates in GTP binding. Residues Cys-21 and Cys-25 each coordinate [4Fe-4S] cluster. An S-adenosyl-L-methionine-binding site is contributed by Tyr-27. Residue Cys-28 participates in [4Fe-4S] cluster binding. Arg-64 contributes to the GTP binding site. Gly-68 is a binding site for S-adenosyl-L-methionine. Ser-95 contacts GTP. Ser-119 lines the S-adenosyl-L-methionine pocket. GTP is bound at residue Lys-155. An S-adenosyl-L-methionine-binding site is contributed by Met-189. [4Fe-4S] cluster is bound by residues Cys-249 and Cys-252. Residue 254–256 (RIR) coordinates GTP. [4Fe-4S] cluster is bound at residue Cys-266.

It belongs to the radical SAM superfamily. MoaA family. Monomer and homodimer. [4Fe-4S] cluster is required as a cofactor.

The catalysed reaction is GTP + AH2 + S-adenosyl-L-methionine = (8S)-3',8-cyclo-7,8-dihydroguanosine 5'-triphosphate + 5'-deoxyadenosine + L-methionine + A + H(+). It functions in the pathway cofactor biosynthesis; molybdopterin biosynthesis. In terms of biological role, catalyzes the cyclization of GTP to (8S)-3',8-cyclo-7,8-dihydroguanosine 5'-triphosphate. This Helicobacter pylori (strain J99 / ATCC 700824) (Campylobacter pylori J99) protein is GTP 3',8-cyclase.